Consider the following 485-residue polypeptide: MEKKSLLILGTASHVGKSSVVTAICRILSRSYRVAPFKAQNMSLNSWITKDGKEIGIAQAIQAKAAGTEPTADMNPVLLKPKGDCVSQVVLLGEPYADKSAGQYYDSIEEMHAVLKGALERLWKEHDIIVMEGAGGAAEINLYERDIVNVGTARLTKAPIILVGDIERGGVFASLYGTIALLPEDVRKNVKGFIINKFRGDIEILRPGLKQLEDKTGIPVLGVLPHFKLRIPSEDSVSLGDKEDSKAEKEIEVAVIRLPRISNFTDFEPLEGLVKVRYVDINEELGNPDAIMIPGTKNTVNDLLDLRASGMDKKIQAFKGKVPIFGICGGYQMLGRTIFDSGVENGVEAEFEGLGLLDIGTRFGEYKKRTVQVTKKVNGYGPILRPIDGEEIKGYEIHMGVTDSNRTVFGDDGAIDEDGFVIGTYLHGLFDNRNIRNALVRYLYEKKGLEYEPDEAISENDAYEELANVVEQNIDMEKLFEIAGV.

In terms of domain architecture, GATase cobBQ-type spans 250–435 (EIEVAVIRLP…LHGLFDNRNI (186 aa)). The active-site Nucleophile is the Cys-328. His-427 is an active-site residue.

Belongs to the CobB/CobQ family. CobQ subfamily.

It participates in cofactor biosynthesis; adenosylcobalamin biosynthesis. In terms of biological role, catalyzes amidations at positions B, D, E, and G on adenosylcobyrinic A,C-diamide. NH(2) groups are provided by glutamine, and one molecule of ATP is hydrogenolyzed for each amidation. This is Probable cobyric acid synthase from Methanosarcina mazei (strain ATCC BAA-159 / DSM 3647 / Goe1 / Go1 / JCM 11833 / OCM 88) (Methanosarcina frisia).